The primary structure comprises 215 residues: Large ribosomal subunit protein uL3 (215 aa).

The segment at 124–164 (KRHGFSRGPMTHGSKNHREPGSTGAGTTPGRIYPGKRMAGR) is disordered.

Belongs to the universal ribosomal protein uL3 family. As to quaternary structure, part of the 50S ribosomal subunit. Forms a cluster with proteins L14 and L19.

In terms of biological role, one of the primary rRNA binding proteins, it binds directly near the 3'-end of the 23S rRNA, where it nucleates assembly of the 50S subunit. The protein is Large ribosomal subunit protein uL3 of Synechococcus sp. (strain RCC307).